The following is a 355-amino-acid chain: Peptide chain release factor 1 (355 aa).

An N5-methylglutamine modification is found at Q231. The tract at residues 283 to 303 (NAQNKEARKTQVGSGDRSERI) is disordered.

It belongs to the prokaryotic/mitochondrial release factor family. In terms of processing, methylated by PrmC. Methylation increases the termination efficiency of RF1.

It is found in the cytoplasm. In terms of biological role, peptide chain release factor 1 directs the termination of translation in response to the peptide chain termination codons UAG and UAA. The chain is Peptide chain release factor 1 from Helicobacter hepaticus (strain ATCC 51449 / 3B1).